The primary structure comprises 909 residues: uncharacterized protein (909 aa).

This is an uncharacterized protein from Sinorhizobium fredii (strain NBRC 101917 / NGR234).